The primary structure comprises 1158 residues: Type IV pilus biogenesis factor PilY1 (1158 aa).

Positions 1-29 are cleaved as a signal peptide; sequence MIHQITRAGKSLLAAGCTLSILFASDSYA. Ca(2+)-binding residues include D841, N843, D845, I847, and D849.

The protein belongs to the PilY1 family.

Its subcellular location is the fimbrium. It localises to the membrane. The protein resides in the cytoplasm. The protein localises to the cytosol. Involved in pilus assembly, twitching motility and adhesion to host cells. Primes type IV pili (T4P) assembly and is required for inclusion of minor pilins PilV, PilW and PilX to the surface pili. Stabilizes assembled pilus fibers likely by antagonizing retraction mediated by PilT. Calcium-binding and calcium release by PilY1 seem to be essential for twitching motility and for regulation of pilus retraction dynamics of PilT. Regulates surface-activated virulence possibly by acting as a surface-attachment mechanosensor. In Pseudomonas aeruginosa (strain UCBPP-PA14), this protein is Type IV pilus biogenesis factor PilY1.